We begin with the raw amino-acid sequence, 266 residues long: RNA-binding protein 7 (266 aa).

Gly2 carries the post-translational modification N-acetylglycine. The RRM domain occupies 10–87; the sequence is RTLFVGNLET…RPIKIQFRSG (78 aa). 2 ZCCHC8 binding regions span residues 25 to 35 and 59 to 76; these read LLFELFHQAGP and HEVSVPYAMNLLNGIKLY. The span at 90 to 115 shows a compositional bias: polar residues; that stretch reads HAPQDVSLSYPQHHVGNSSPTSTSPS. Residues 90 to 118 form a disordered region; it reads HAPQDVSLSYPQHHVGNSSPTSTSPSRYE. Ser136 and Ser137 each carry phosphoserine. The residue at position 152 (Arg152) is an Omega-N-methylarginine. Residues 162–266 form a disordered region; the sequence is SSPLDQSGFS…RDGKWRSSRH (105 aa). Residues 173 to 188 are compositionally biased toward low complexity; the sequence is SVQSHSHSFNQSSSSQ. Ser204 is subject to Phosphoserine. Over residues 209 to 266 the composition is skewed to basic and acidic residues; that stretch reads ADRHYSREQRYTDHGSDHHYRGKRDDFFYEDRNHDDWSHDYDNRRDSSRDGKWRSSRH.

As to quaternary structure, component of the nuclear exosome targeting (NEXT) complex composed of MTREX, ZCCHC8, and RBM7 that directs a subset of non-coding short-lived RNAs for exosomal degradation. Interacts with ZCCHC8 and SF3B2/SAP145. Binds to MTREX through ZCCHC8. Interacts with YWHAE and YWHAZ; these interactions are stress-dependent and RBM7 phosphorylation dependent; release RNA from the NEXT complex and may affect RNA targeting to the nuclear RNA exosomome for degradation. Interacts with MEPCE and LARP7, the core subunits of 7SK snRNP; upon genotoxic stress this interaction is enhanced, triggering the release of inactive P-TEFb complex from the core and P-TEFb complex activation. Phosphorylated at Ser-136 by MAPK14/p38-alpha-activated MAPKAPK2/MK2; this phosphorylation is stress-dependent; this phosphorylation decreases its RNA-binding capacity therefore affecting RNA nuclear exosome-mediated degradation. This phosphorylation mediates YWHAE and YWHAZ interactions. As to expression, ubiquitous.

It localises to the nucleus. Its subcellular location is the nucleoplasm. In terms of biological role, RNA-binding subunit of the trimeric nuclear exosome targeting (NEXT) complex, a complex that functions as an RNA exosome cofactor that directs a subset of non-coding short-lived RNAs for exosomal degradation. NEXT is involved in surveillance and turnover of aberrant transcripts and non-coding RNAs. Binds preferentially polyuridine sequences and associates with newly synthesized RNAs, including pre-mRNAs and short-lived exosome substrates such as promoter upstream transcripts (PROMPTs), enhancer RNAs (eRNAs), and 3'-extended products from small nuclear RNAs (snRNAs). Participates in several biological processes including DNA damage response (DDR) and stress response. During stress response, activation of the p38MAPK-MK2 pathway decreases RBM7-RNA-binding and subsequently the RNA exosome degradation activities, thereby modulating the turnover of non-coding transcriptome. Participates in DNA damage response (DDR), through its interaction with MEPCE and LARP7, the core subunits of 7SK snRNP complex, that release the positive transcription elongation factor b (P-TEFb) complex from the 7SK snRNP. In turn, activation of P-TEFb complex induces the transcription of P-TEFb-dependent DDR genes to promote cell viability. In Homo sapiens (Human), this protein is RNA-binding protein 7.